Reading from the N-terminus, the 184-residue chain is ATP synthase subunit delta (184 aa).

The protein belongs to the ATPase delta chain family. F-type ATPases have 2 components, F(1) - the catalytic core - and F(0) - the membrane proton channel. F(1) has five subunits: alpha(3), beta(3), gamma(1), delta(1), epsilon(1). F(0) has three main subunits: a(1), b(2) and c(10-14). The alpha and beta chains form an alternating ring which encloses part of the gamma chain. F(1) is attached to F(0) by a central stalk formed by the gamma and epsilon chains, while a peripheral stalk is formed by the delta and b chains.

The protein localises to the cell inner membrane. Functionally, f(1)F(0) ATP synthase produces ATP from ADP in the presence of a proton or sodium gradient. F-type ATPases consist of two structural domains, F(1) containing the extramembraneous catalytic core and F(0) containing the membrane proton channel, linked together by a central stalk and a peripheral stalk. During catalysis, ATP synthesis in the catalytic domain of F(1) is coupled via a rotary mechanism of the central stalk subunits to proton translocation. Its function is as follows. This protein is part of the stalk that links CF(0) to CF(1). It either transmits conformational changes from CF(0) to CF(1) or is implicated in proton conduction. This is ATP synthase subunit delta from Magnetococcus marinus (strain ATCC BAA-1437 / JCM 17883 / MC-1).